Here is a 629-residue protein sequence, read N- to C-terminus: tRNA uridine 5-carboxymethylaminomethyl modification enzyme MnmG (629 aa).

13–18 (GGGHAG) is an FAD binding site. NAD(+) is bound at residue 273–287 (GPRYCPSIEDKIMRF).

Belongs to the MnmG family. Homodimer. Heterotetramer of two MnmE and two MnmG subunits. Requires FAD as cofactor.

The protein resides in the cytoplasm. In terms of biological role, NAD-binding protein involved in the addition of a carboxymethylaminomethyl (cmnm) group at the wobble position (U34) of certain tRNAs, forming tRNA-cmnm(5)s(2)U34. The protein is tRNA uridine 5-carboxymethylaminomethyl modification enzyme MnmG of Tolumonas auensis (strain DSM 9187 / NBRC 110442 / TA 4).